The sequence spans 474 residues: Protein IFIT1 homolog B (474 aa).

TPR repeat units follow at residues 52 to 85, 95 to 128, 141 to 174, 182 to 216, 218 to 250, 251 to 284, 305 to 339, 340 to 373, 378 to 412, and 437 to 470; these read VGIH…IQKE, LVTW…CKKF, VDCE…NPEN, AITV…NPDD, YIRV…ISSQ, AYVF…TPTS, ATNW…KRTF, EMAY…KIFE, QEIH…EKMS, and VESV…AADL.

It belongs to the IFIT family.

IFIT1B is likely non-functional, lacking the critical antiviral role of IFIT1. Unlike IFIT1, which is essential in the innate immune response as part of an interferon-dependent multiprotein complex, IFIT1B does not prevent the translation of viral RNAs that lack host-specific 2'-O-methylation at their 5' cap. Consequently, it probably cannot inhibit their translation by competing with the host translation machinery. This Homo sapiens (Human) protein is Protein IFIT1 homolog B.